We begin with the raw amino-acid sequence, 336 residues long: SCP domain-containing protein 1 (336 aa).

The signal sequence occupies residues 1–18 (MEFKLLLVLCFNIGLICS). Asn47 carries an N-linked (GlcNAc...) asparagine glycan. The segment covering 73 to 85 (QGGNTAPSSSLPG) has biased composition (polar residues). The interval 73 to 94 (QGGNTAPSSSLPGVSSMPMPSA) is disordered. Residues 175–292 (LEEHNKFRSD…YCGDMSFIAC (118 aa)) form the SCP domain. N-linked (GlcNAc...) asparagine glycans are attached at residues Asn213 and Asn257.

In terms of tissue distribution, component of the acid-insoluble and acid-soluble organic matrix of calcified layers of the shell (at protein level).

The protein resides in the secreted. The sequence is that of SCP domain-containing protein 1 from Lottia gigantea (Giant owl limpet).